We begin with the raw amino-acid sequence, 558 residues long: MAALTRDPQFQKLQQWYREHGSELNLRRLFDANKDRFNHFSLTLNTNHGHILVDYSKNLVTEDVMRMLVDLAKSRGVEAARERMFNGEKINYTEGRAVLHVALRNRSNTPILVDGKDVMPEVNKVLDKMKSFCQRVRSGDWKGYTGKTITDIINIGIGGSDLGPLMVTEALKPYSSGGPRVWYVSNIDGTHIAKTLAQLNPESSVSIIASKTFTTQETITNAETAKEWFLQTAKDPSAVAKHFVALSTNTTKVKEFGIDPQNMFEFWDWVGGRYSLWSAIGLSIALHVGFDNFEQLLSGAHWMDQHFRTTPLEKNAPVLLALLGIWYINCFGCETHAMLPYDQYLHRFAAYFQQGDMESNGKYITKSGTRVDHQTGPIVWGEPGTNGQHAFYQLIHQGTKMIPCDFLIPVQTQHPIRKGLHHKVLLANFLAQTEALMRGKSTEEARKELQAAGKSPEDLERLLPHKVFEGNRPTNSIVFTKLTPFMLGALVAMYEHKIFVQGIIWDINSFDQWGVELGKQLAKKIEPELDGSAQVTSHDASTNGLINFIKQQREARIQ.

Position 2 is an N-acetylalanine (Ala-2). The residue at position 12 (Lys-12) is an N6-acetyllysine. N6-(2-hydroxyisobutyryl)lysine is present on Lys-34. The residue at position 107 (Ser-107) is a Phosphoserine. Thr-109 bears the Phosphothreonine mark. Lys-142 bears the N6-acetyllysine mark. 159-160 (GS) is a binding site for D-glucose 6-phosphate. At Ser-185 the chain carries Phosphoserine; by CK2. 210–215 (SKTFTT) contributes to the D-glucose 6-phosphate binding site. At Thr-250 the chain carries Phosphothreonine. Positions 354, 358, and 389 each coordinate D-glucose 6-phosphate. Glu-358 functions as the Proton donor in the catalytic mechanism. Residue His-389 is part of the active site. Lys-454 carries the N6-acetyllysine; alternate modification. Position 454 is an N6-malonyllysine; alternate (Lys-454). Position 454 is an N6-succinyllysine; alternate (Lys-454). Residue Ser-455 is modified to Phosphoserine. Lys-519 contributes to the D-glucose 6-phosphate binding site. The active site involves Lys-519.

Belongs to the GPI family. As to quaternary structure, homodimer; in the catalytically active form. Monomer in the secreted form. Phosphorylation at Ser-185 by CK2 has been shown to decrease enzymatic activity and may contribute to secretion by a non-classical secretory pathway. In terms of processing, ISGylated.

The protein localises to the cytoplasm. It is found in the secreted. The enzyme catalyses alpha-D-glucose 6-phosphate = beta-D-fructose 6-phosphate. It functions in the pathway carbohydrate degradation; glycolysis; D-glyceraldehyde 3-phosphate and glycerone phosphate from D-glucose: step 2/4. Functionally, in the cytoplasm, catalyzes the conversion of glucose-6-phosphate to fructose-6-phosphate, the second step in glycolysis, and the reverse reaction during gluconeogenesis. Besides it's role as a glycolytic enzyme, also acts as a secreted cytokine: acts as an angiogenic factor (AMF) that stimulates endothelial cell motility. Acts as a neurotrophic factor, neuroleukin, for spinal and sensory neurons. It is secreted by lectin-stimulated T-cells and induces immunoglobulin secretion. This Pongo abelii (Sumatran orangutan) protein is Glucose-6-phosphate isomerase.